The sequence spans 93 residues: DNA-directed RNA polymerase subunit omega (93 aa).

The protein belongs to the RNA polymerase subunit omega family. In terms of assembly, the RNAP catalytic core consists of 2 alpha, 1 beta, 1 beta' and 1 omega subunit. When a sigma factor is associated with the core the holoenzyme is formed, which can initiate transcription.

It catalyses the reaction RNA(n) + a ribonucleoside 5'-triphosphate = RNA(n+1) + diphosphate. Its function is as follows. Promotes RNA polymerase assembly. Latches the N- and C-terminal regions of the beta' subunit thereby facilitating its interaction with the beta and alpha subunits. This is DNA-directed RNA polymerase subunit omega from Actinobacillus pleuropneumoniae serotype 7 (strain AP76).